The following is a 223-amino-acid chain: uncharacterized protein (223 aa).

The next 4 membrane-spanning stretches (helical) occupy residues 22–42 (LTVG…FVVV), 59–79 (GVAL…ATLI), 85–105 (IFSL…WCSM), and 164–184 (MAWA…SQAF).

The protein belongs to the Rht family.

The protein localises to the cell membrane. This is an uncharacterized protein from Escherichia coli (strain K12).